Here is a 282-residue protein sequence, read N- to C-terminus: Undecaprenyl-diphosphatase (282 aa).

7 consecutive transmembrane segments (helical) span residues 45 to 65 (AFMEMFNVVIQLGAILAVVFI), 86 to 106 (WQLWAKVVVASLPAVIIGIPL), 114 to 134 (FHNFVSVAIMLIIYGIAFILI), 151 to 171 (LPYKTALYIGFFQVLSLFPGT), 196 to 216 (FFLGIPVMFGASGIKVLKFIL), 224 to 244 (GQLTLLLVAMIVAFGVSMYVI), and 256 to 276 (FTVFGKYRIGLGALLLIYWVF).

Belongs to the UppP family.

Its subcellular location is the cell membrane. The catalysed reaction is di-trans,octa-cis-undecaprenyl diphosphate + H2O = di-trans,octa-cis-undecaprenyl phosphate + phosphate + H(+). Catalyzes the dephosphorylation of undecaprenyl diphosphate (UPP). Confers resistance to bacitracin. This chain is Undecaprenyl-diphosphatase, found in Streptococcus gordonii (strain Challis / ATCC 35105 / BCRC 15272 / CH1 / DL1 / V288).